The chain runs to 269 residues: GATA zinc finger domain-containing protein 1 (269 aa).

Residues 9–33 (CSVCKTTSSSMWKKGAQGEILCHHC) form a GATA-type zinc finger. The disordered stretch occupies residues 63 to 115 (ATFASTSATPPQSNGGGGGKQSKQEIHRRSARLRNTKYKSAPAAEKKVSTKGK). K262 participates in a covalent cross-link: Glycyl lysine isopeptide (Lys-Gly) (interchain with G-Cter in SUMO2).

As to quaternary structure, component of a chromatin complex, at least composed of KDM5A, GATAD1 and EMSY. As to expression, ubiquitously expressed among various tissue types. Expressed in left ventricular myocytes.

Its subcellular location is the nucleus. Component of some chromatin complex recruited to chromatin sites methylated 'Lys-4' of histone H3 (H3K4me), with a preference for trimethylated form (H3K4me3). This Homo sapiens (Human) protein is GATA zinc finger domain-containing protein 1 (GATAD1).